A 66-amino-acid polypeptide reads, in one-letter code: MKKIVFVLVLMLSSFGTFGQETASRQFGDAFSTPIAAEVNKKACDTELPPSDWCCEVCCNPACAGC.

Residues 1-19 form the signal peptide; it reads MKKIVFVLVLMLSSFGTFG. Residues 20–50 constitute a propeptide that is removed on maturation; that stretch reads QETASRQFGDAFSTPIAAEVNKKACDTELPP. Cystine bridges form between Cys-54–Cys-59, Cys-55–Cys-63, and Cys-58–Cys-66.

Belongs to the heat-stable enterotoxin family.

It localises to the secreted. Functionally, toxin which activates the particulate form of guanylate cyclase and increases cyclic GMP levels within the host intestinal epithelial cells. In Yersinia kristensenii, this protein is Heat-stable enterotoxin (yst).